Consider the following 154-residue polypeptide: Small ribosomal subunit protein uS7 (154 aa).

This sequence belongs to the universal ribosomal protein uS7 family.

The sequence is that of Small ribosomal subunit protein uS7 (RPS5) from Nicotiana plumbaginifolia (Leadwort-leaved tobacco).